Reading from the N-terminus, the 89-residue chain is Small ribosomal subunit protein uS15 (89 aa).

The protein belongs to the universal ribosomal protein uS15 family. Part of the 30S ribosomal subunit. Forms a bridge to the 50S subunit in the 70S ribosome, contacting the 23S rRNA.

In terms of biological role, one of the primary rRNA binding proteins, it binds directly to 16S rRNA where it helps nucleate assembly of the platform of the 30S subunit by binding and bridging several RNA helices of the 16S rRNA. Forms an intersubunit bridge (bridge B4) with the 23S rRNA of the 50S subunit in the ribosome. The chain is Small ribosomal subunit protein uS15 from Escherichia coli O157:H7.